We begin with the raw amino-acid sequence, 727 residues long: Glucans biosynthesis glucosyltransferase H (727 aa).

A disordered region spans residues 17-41 (GSAMPNERPGPMEPQSLSQMPEGFP). The next 6 helical transmembrane spans lie at 58 to 80 (FFVV…AVFS), 95 to 117 (FAIN…LLLL), 407 to 429 (GIMA…MLAL), 457 to 479 (ALRL…VLLL), 499 to 521 (VLFE…CGAV), and 572 to 594 (LLAW…AWTG).

This sequence belongs to the glycosyltransferase 2 family. OpgH subfamily.

Its subcellular location is the cell inner membrane. The protein operates within glycan metabolism; osmoregulated periplasmic glucan (OPG) biosynthesis. Functionally, involved in the biosynthesis of osmoregulated periplasmic glucans (OPGs). This is Glucans biosynthesis glucosyltransferase H from Shewanella oneidensis (strain ATCC 700550 / JCM 31522 / CIP 106686 / LMG 19005 / NCIMB 14063 / MR-1).